The following is a 720-amino-acid chain: MFNKHSVEIDWGGRPLKLETGKIARQADGAVVATYGETVVLATVVAAKTPREGVDFLPLTVDYQEKTYAAGRIPGGYFKREGRPSEKETLVSRLIDRPVRPLFADGWRNETQVIVTVLSHDMENDPDVLAMVAASAALTLSGAPFRGPIGAARVGFMNDEYVLNPTLDEMVDTQLELVVAGTADAVLMVESEAKELSEDIMLGAVMFGHRHFQPVINAIIELAEKAAKEPREVSQADDSALEKEMLGLIEGELRPAYAIADKQQRQNAVAAAKAKVIAHYFPEGQEPKYDKLRIAAVFKHLEAKIVRWNILDTGKRIDGRDAKTVRNILAEVGVLPRAHGSALFTRGETQAMVVTTLGTGEDEQYIDALSGTYKETFLLHYNFPPYSVGETGRLGSTKRREIGHGKLAWRAIHPVLPPHHEFPYTIRVVSEITESNGSSSMASVCGASLSLMDAGVPLKRPTAGIAMGLILEGSRYAVLSDILGDEDHLGDMDFKVAGTEVGISSLQMDIKIAGITEEIMKVALAQAREGRIHILGEMAKALTNARAELGEYAPRIETFKIPTDKIREVIGTGGKVIREIVEKTGAKINIEDDGTVKVASNDGEAMKAAIKWIKSIASDPEVGQIYEGTVVKVMEFGAFVNFFGAKDGLVHISQLAANRVQKSSDIVKEGDKVKVKLLGFDDRGKTRLSMKAVDQQTGEDLEAAGHKAEKADAPREAAGE.

Mg(2+)-binding residues include Asp487 and Asp493. Positions 554-613 (PRIETFKIPTDKIREVIGTGGKVIREIVEKTGAKINIEDDGTVKVASNDGEAMKAAIKWI) constitute a KH domain. Positions 623–691 (GQIYEGTVVK…DRGKTRLSMK (69 aa)) constitute an S1 motif domain. The segment at 691–720 (KAVDQQTGEDLEAAGHKAEKADAPREAAGE) is disordered. Positions 703-720 (AAGHKAEKADAPREAAGE) are enriched in basic and acidic residues.

The protein belongs to the polyribonucleotide nucleotidyltransferase family. Requires Mg(2+) as cofactor.

The protein resides in the cytoplasm. The enzyme catalyses RNA(n+1) + phosphate = RNA(n) + a ribonucleoside 5'-diphosphate. Functionally, involved in mRNA degradation. Catalyzes the phosphorolysis of single-stranded polyribonucleotides processively in the 3'- to 5'-direction. This Nitrobacter hamburgensis (strain DSM 10229 / NCIMB 13809 / X14) protein is Polyribonucleotide nucleotidyltransferase.